We begin with the raw amino-acid sequence, 147 residues long: Large ribosomal subunit protein bL21 (147 aa).

The segment at 115–147 is disordered; that stretch reads KSIKVGKPTPKSSSKKEETVKKETKPKSEKSTN. Positions 128 to 147 are enriched in basic and acidic residues; the sequence is SKKEETVKKETKPKSEKSTN.

It belongs to the bacterial ribosomal protein bL21 family. As to quaternary structure, part of the 50S ribosomal subunit. Contacts protein L20.

In terms of biological role, this protein binds to 23S rRNA in the presence of protein L20. This is Large ribosomal subunit protein bL21 from Prochlorococcus marinus (strain MIT 9215).